The sequence spans 346 residues: Probable electron transfer flavoprotein subunit alpha, mitochondrial (346 aa).

Position 285 to 313 (285 to 313 (LYVAIGISGAIQHLAGMKESKMIIAINKD)) interacts with FAD.

This sequence belongs to the ETF alpha-subunit/FixB family. As to quaternary structure, heterodimer of an alpha and a beta subunit. It depends on FAD as a cofactor.

Its subcellular location is the mitochondrion matrix. Functionally, the electron transfer flavoprotein serves as a specific electron acceptor for several dehydrogenases, including five acyl-CoA dehydrogenases, glutaryl-CoA and sarcosine dehydrogenase. It transfers the electrons to the main mitochondrial respiratory chain via ETF-ubiquinone oxidoreductase (ETF dehydrogenase). The protein is Probable electron transfer flavoprotein subunit alpha, mitochondrial (ETF1) of Cryptococcus gattii serotype B (strain WM276 / ATCC MYA-4071) (Filobasidiella gattii).